The chain runs to 995 residues: Bifunctional glutamine synthetase adenylyltransferase/adenylyl-removing enzyme (995 aa).

The interval 1–487 (MNVTKPATQR…LHAKLFYQPL (487 aa)) is adenylyl removase. Positions 492–995 (APAGLEIAGR…KAVVRKVFGS (504 aa)) are adenylyl transferase.

The protein belongs to the GlnE family. The cofactor is Mg(2+).

The enzyme catalyses [glutamine synthetase]-O(4)-(5'-adenylyl)-L-tyrosine + phosphate = [glutamine synthetase]-L-tyrosine + ADP. It catalyses the reaction [glutamine synthetase]-L-tyrosine + ATP = [glutamine synthetase]-O(4)-(5'-adenylyl)-L-tyrosine + diphosphate. In terms of biological role, involved in the regulation of glutamine synthetase GlnA, a key enzyme in the process to assimilate ammonia. When cellular nitrogen levels are high, the C-terminal adenylyl transferase (AT) inactivates GlnA by covalent transfer of an adenylyl group from ATP to specific tyrosine residue of GlnA, thus reducing its activity. Conversely, when nitrogen levels are low, the N-terminal adenylyl removase (AR) activates GlnA by removing the adenylyl group by phosphorolysis, increasing its activity. The regulatory region of GlnE binds the signal transduction protein PII (GlnB) which indicates the nitrogen status of the cell. The protein is Bifunctional glutamine synthetase adenylyltransferase/adenylyl-removing enzyme of Mycobacterium marinum (strain ATCC BAA-535 / M).